A 350-amino-acid polypeptide reads, in one-letter code: Holliday junction branch migration complex subunit RuvB (350 aa).

Residues 4–184 (ADRIVTASSR…FGIVQRLEFY (181 aa)) form a large ATPase domain (RuvB-L) region. ATP contacts are provided by residues Ile-23, Arg-24, Gly-65, Lys-68, Thr-69, Thr-70, 131 to 133 (EDF), Arg-174, Tyr-184, and Arg-221. Thr-69 is a binding site for Mg(2+). The interval 185–255 (STEDLATIVR…IADLALNMLD (71 aa)) is small ATPAse domain (RuvB-S). Residues 258-350 (ERGFDHQDRR…TPDLFEGDIV (93 aa)) are head domain (RuvB-H). DNA contacts are provided by Arg-294, Arg-313, and Arg-318.

This sequence belongs to the RuvB family. Homohexamer. Forms an RuvA(8)-RuvB(12)-Holliday junction (HJ) complex. HJ DNA is sandwiched between 2 RuvA tetramers; dsDNA enters through RuvA and exits via RuvB. An RuvB hexamer assembles on each DNA strand where it exits the tetramer. Each RuvB hexamer is contacted by two RuvA subunits (via domain III) on 2 adjacent RuvB subunits; this complex drives branch migration. In the full resolvosome a probable DNA-RuvA(4)-RuvB(12)-RuvC(2) complex forms which resolves the HJ.

The protein localises to the cytoplasm. The catalysed reaction is ATP + H2O = ADP + phosphate + H(+). Functionally, the RuvA-RuvB-RuvC complex processes Holliday junction (HJ) DNA during genetic recombination and DNA repair, while the RuvA-RuvB complex plays an important role in the rescue of blocked DNA replication forks via replication fork reversal (RFR). RuvA specifically binds to HJ cruciform DNA, conferring on it an open structure. The RuvB hexamer acts as an ATP-dependent pump, pulling dsDNA into and through the RuvAB complex. RuvB forms 2 homohexamers on either side of HJ DNA bound by 1 or 2 RuvA tetramers; 4 subunits per hexamer contact DNA at a time. Coordinated motions by a converter formed by DNA-disengaged RuvB subunits stimulates ATP hydrolysis and nucleotide exchange. Immobilization of the converter enables RuvB to convert the ATP-contained energy into a lever motion, pulling 2 nucleotides of DNA out of the RuvA tetramer per ATP hydrolyzed, thus driving DNA branch migration. The RuvB motors rotate together with the DNA substrate, which together with the progressing nucleotide cycle form the mechanistic basis for DNA recombination by continuous HJ branch migration. Branch migration allows RuvC to scan DNA until it finds its consensus sequence, where it cleaves and resolves cruciform DNA. This chain is Holliday junction branch migration complex subunit RuvB, found in Stutzerimonas stutzeri (strain A1501) (Pseudomonas stutzeri).